Consider the following 359-residue polypeptide: Phospho-N-acetylmuramoyl-pentapeptide-transferase (359 aa).

The next 10 membrane-spanning stretches (helical) occupy residues 3–23 (QILI…PVLI), 55–75 (VAIL…GLAL), 84–104 (GLLV…DDLI), 120–140 (TVGI…FGNA), 156–176 (IATV…LVSA), 187–207 (LDGL…LITF), 231–251 (LALV…WNAA), 255–275 (IFMG…LSVT), 280–300 (ILAV…VVQI), and 334–354 (FWLL…GEWL).

This sequence belongs to the glycosyltransferase 4 family. MraY subfamily. Mg(2+) is required as a cofactor.

It localises to the cell membrane. It carries out the reaction UDP-N-acetyl-alpha-D-muramoyl-L-alanyl-gamma-D-glutamyl-meso-2,6-diaminopimeloyl-D-alanyl-D-alanine + di-trans,octa-cis-undecaprenyl phosphate = di-trans,octa-cis-undecaprenyl diphospho-N-acetyl-alpha-D-muramoyl-L-alanyl-D-glutamyl-meso-2,6-diaminopimeloyl-D-alanyl-D-alanine + UMP. The protein operates within cell wall biogenesis; peptidoglycan biosynthesis. Its function is as follows. Catalyzes the initial step of the lipid cycle reactions in the biosynthesis of the cell wall peptidoglycan: transfers peptidoglycan precursor phospho-MurNAc-pentapeptide from UDP-MurNAc-pentapeptide onto the lipid carrier undecaprenyl phosphate, yielding undecaprenyl-pyrophosphoryl-MurNAc-pentapeptide, known as lipid I. This Mycobacterium sp. (strain JLS) protein is Phospho-N-acetylmuramoyl-pentapeptide-transferase.